Reading from the N-terminus, the 403-residue chain is Argininosuccinate synthase (403 aa).

ATP is bound by residues 12–20 (AYSGGLDTS) and Ala39. Positions 91 and 96 each coordinate L-citrulline. Gly121 contributes to the ATP binding site. Residues Thr123, Asn127, and Asp128 each coordinate L-aspartate. Asn127 lines the L-citrulline pocket. The L-citrulline site is built by Arg131, Ser180, Ser189, Glu265, and Tyr277.

This sequence belongs to the argininosuccinate synthase family. Type 1 subfamily. Homotetramer.

Its subcellular location is the cytoplasm. It carries out the reaction L-citrulline + L-aspartate + ATP = 2-(N(omega)-L-arginino)succinate + AMP + diphosphate + H(+). The protein operates within amino-acid biosynthesis; L-arginine biosynthesis; L-arginine from L-ornithine and carbamoyl phosphate: step 2/3. The sequence is that of Argininosuccinate synthase from Vibrio vulnificus (strain CMCP6).